The sequence spans 343 residues: Heat-inducible transcription repressor HrcA (343 aa).

The protein belongs to the HrcA family.

Functionally, negative regulator of class I heat shock genes (grpE-dnaK-dnaJ and groELS operons). Prevents heat-shock induction of these operons. In Clostridium acetobutylicum (strain ATCC 824 / DSM 792 / JCM 1419 / IAM 19013 / LMG 5710 / NBRC 13948 / NRRL B-527 / VKM B-1787 / 2291 / W), this protein is Heat-inducible transcription repressor HrcA.